A 66-amino-acid chain; its full sequence is Beta-toxin Cbo1 (66 aa).

The region spanning 1–66 is the LCN-type CS-alpha/beta domain; that stretch reads KEGYLVNHST…VWPLPKKTCN (66 aa). Intrachain disulfides connect C12–C65, C16–C41, C25–C46, and C29–C48. N66 is subject to Asparagine amide.

The protein belongs to the long (4 C-C) scorpion toxin superfamily. Sodium channel inhibitor family. Beta subfamily. As to expression, expressed by the venom gland.

Its subcellular location is the secreted. Its function is as follows. Beta toxins bind voltage-independently at site-4 of sodium channels and shift the voltage of activation toward more negative potentials thereby affecting sodium channel activation and promoting spontaneous and repetitive firing. Is active on the human voltage-gated sodium channel Nav1.6/SCN8A when tested at 200 nM. In vivo, is toxic to mice when intraperitoneally injected. The protein is Beta-toxin Cbo1 of Centruroides bonito (Scorpion).